The following is a 508-amino-acid chain: Photosystem II CP47 reaction center protein (508 aa).

6 helical membrane-spanning segments follow: residues 21-36 (SVHIMHTALVSGWAGS), 101-115 (IVFSGLCFLAAIWHW), 140-156 (GIHLFLSGVTCFGFGAF), 203-218 (IAAGTLGILAGLFHLS), 237-252 (VLSSSIAAVFFAAFVV), and 457-472 (TFALLFFFGHIWHGAR).

The protein belongs to the PsbB/PsbC family. PsbB subfamily. In terms of assembly, PSII is composed of 1 copy each of membrane proteins PsbA, PsbB, PsbC, PsbD, PsbE, PsbF, PsbH, PsbI, PsbJ, PsbK, PsbL, PsbM, PsbT, PsbX, PsbY, PsbZ, Psb30/Ycf12, at least 3 peripheral proteins of the oxygen-evolving complex and a large number of cofactors. It forms dimeric complexes. It depends on Binds multiple chlorophylls. PSII binds additional chlorophylls, carotenoids and specific lipids. as a cofactor.

It localises to the plastid. Its subcellular location is the chloroplast thylakoid membrane. Its function is as follows. One of the components of the core complex of photosystem II (PSII). It binds chlorophyll and helps catalyze the primary light-induced photochemical processes of PSII. PSII is a light-driven water:plastoquinone oxidoreductase, using light energy to abstract electrons from H(2)O, generating O(2) and a proton gradient subsequently used for ATP formation. This is Photosystem II CP47 reaction center protein from Drimys granadensis.